The primary structure comprises 116 residues: Venom nerve growth factor (116 aa).

Cystine bridges form between Cys-14-Cys-78, Cys-56-Cys-106, and Cys-66-Cys-108. An a 1,2-diacyl-sn-glycerol-binding site is contributed by Lys-86.

This sequence belongs to the NGF-beta family. Homodimer; non-covalently linked. Interacts with NTRK1. Post-translationally, not glycosylated. Expressed by the venom gland.

It localises to the secreted. Nerve growth factor is important for the development and maintenance of the sympathetic and sensory nervous systems. It stimulates division and differentiation of sympathetic and embryonic sensory neurons as well as basal forebrain cholinergic neurons in the brain. Its relevance in the snake venom is not clear. However, it has been shown to inhibit metalloproteinase-dependent proteolysis of platelet glycoprotein Ib alpha, suggesting a metalloproteinase inhibition to prevent metalloprotease autodigestion and/or protection against prey proteases. Binds a lipid between the two protein chains in the homodimer. The lipid-bound form promotes histamine relase from mouse mast cells, contrary to the lipid-free form. This is Venom nerve growth factor from Naja atra (Chinese cobra).